The following is a 387-amino-acid chain: Succinate--CoA ligase [ADP-forming] subunit beta (387 aa).

The region spanning 9–236 is the ATP-grasp domain; the sequence is KELFAKHNVP…KDATDPLELK (228 aa). ATP contacts are provided by residues Lys45, 52-54, Ser94, and Glu99; that span reads GRG. 2 residues coordinate Mg(2+): Asn191 and Asp205. Substrate-binding positions include Asn256 and 318–320; that span reads GIT.

It belongs to the succinate/malate CoA ligase beta subunit family. As to quaternary structure, heterotetramer of two alpha and two beta subunits. Requires Mg(2+) as cofactor.

It carries out the reaction succinate + ATP + CoA = succinyl-CoA + ADP + phosphate. The enzyme catalyses GTP + succinate + CoA = succinyl-CoA + GDP + phosphate. Its pathway is carbohydrate metabolism; tricarboxylic acid cycle; succinate from succinyl-CoA (ligase route): step 1/1. Its function is as follows. Succinyl-CoA synthetase functions in the citric acid cycle (TCA), coupling the hydrolysis of succinyl-CoA to the synthesis of either ATP or GTP and thus represents the only step of substrate-level phosphorylation in the TCA. The beta subunit provides nucleotide specificity of the enzyme and binds the substrate succinate, while the binding sites for coenzyme A and phosphate are found in the alpha subunit. This chain is Succinate--CoA ligase [ADP-forming] subunit beta, found in Mycolicibacterium gilvum (strain PYR-GCK) (Mycobacterium gilvum (strain PYR-GCK)).